The primary structure comprises 179 residues: Large ribosomal subunit protein uL5 (179 aa).

It belongs to the universal ribosomal protein uL5 family. Part of the 50S ribosomal subunit; part of the 5S rRNA/L5/L18/L25 subcomplex. Contacts the 5S rRNA and the P site tRNA. Forms a bridge to the 30S subunit in the 70S ribosome.

This is one of the proteins that bind and probably mediate the attachment of the 5S RNA into the large ribosomal subunit, where it forms part of the central protuberance. In the 70S ribosome it contacts protein S13 of the 30S subunit (bridge B1b), connecting the 2 subunits; this bridge is implicated in subunit movement. Contacts the P site tRNA; the 5S rRNA and some of its associated proteins might help stabilize positioning of ribosome-bound tRNAs. The protein is Large ribosomal subunit protein uL5 of Bacillus licheniformis (strain ATCC 14580 / DSM 13 / JCM 2505 / CCUG 7422 / NBRC 12200 / NCIMB 9375 / NCTC 10341 / NRRL NRS-1264 / Gibson 46).